A 275-amino-acid chain; its full sequence is C-type lectin domain family 12 member B (275 aa).

The Cytoplasmic portion of the chain corresponds to 1 to 41 (MSDEVTYATLMLQDSARVRGNQDGNNLRKEGHPAQSSLWRG). The ITIM motif motif lies at 5-10 (VTYATL). Position 7 is a phosphotyrosine (Y7). A helical; Signal-anchor for type II membrane protein transmembrane segment spans residues 42–64 (AALSLMTLCLVLVTGLVTLATMF). The Extracellular portion of the chain corresponds to 65 to 275 (LQVSNDINSD…ASLVKTEDLD (211 aa)). Residues N91, N175, and N236 are each glycosylated (N-linked (GlcNAc...) asparagine). Positions 149–263 (YGNSCYYFSI…CSAEIPWICE (115 aa)) constitute a C-type lectin domain. Cystine bridges form between C171/C262 and C241/C254.

As to quaternary structure, homodimer. Interacts (via ITIM motif) with PTPN6. Interacts (via ITIM motif) with PTPN11; this interaction triggers dephosphorylation and activation of PTPN11.

Its subcellular location is the cell membrane. Inhibitory receptor postulated to negatively regulate immune and non-immune functions. Upon phosphorylation, recruits SH2 domain-containing PTPN6 and PTPN11 phosphatases to its ITIM motif and antagonizes activation signals. Although it inhibits KLRK1/NKG2D-mediated signaling, it does not bind known ligands of KLRK1/NKG2D and therefore is not its inhibitory counterpart. May limit activation of myeloid cell subsets in response to infection or tissue inflammation. May protect target cells against natural killer cell-mediated lysis. May negatively regulate cell cycle and differentiation of melanocytes via inactivation of STAT3. The polypeptide is C-type lectin domain family 12 member B (Clec12b) (Mus musculus (Mouse)).